The chain runs to 548 residues: Eukaryotic translation initiation factor 3 subunit D (548 aa).

K53 carries the N6-acetyllysine modification. S161 bears the Phosphoserine mark. The segment at D285–P299 is RNA gate. Positions P523 to A548 are disordered. Phosphoserine occurs at positions 528 and 529. Residues S529–A548 show a composition bias toward acidic residues.

The protein belongs to the eIF-3 subunit D family. Component of the eukaryotic translation initiation factor 3 (eIF-3) complex, which is composed of 13 subunits: EIF3A, EIF3B, EIF3C, EIF3D, EIF3E, EIF3F, EIF3G, EIF3H, EIF3I, EIF3J, EIF3K, EIF3L and EIF3M. The eIF-3 complex appears to include 3 stable modules: module A is composed of EIF3A, EIF3B, EIF3G and EIF3I; module B is composed of EIF3F, EIF3H, and EIF3M; and module C is composed of EIF3C, EIF3D, EIF3E, EIF3K and EIF3L. EIF3C of module C binds EIF3B of module A and EIF3H of module B, thereby linking the three modules. EIF3J is a labile subunit that binds to the eIF-3 complex via EIF3B. The eIF-3 complex interacts with RPS6KB1 under conditions of nutrient depletion. Mitogenic stimulation leads to binding and activation of a complex composed of MTOR and RPTOR, leading to phosphorylation and release of RPS6KB1 and binding of EIF4B to eIF-3.

Its subcellular location is the cytoplasm. Functionally, mRNA cap-binding component of the eukaryotic translation initiation factor 3 (eIF-3) complex, a complex required for several steps in the initiation of protein synthesis of a specialized repertoire of mRNAs. The eIF-3 complex associates with the 40S ribosome and facilitates the recruitment of eIF-1, eIF-1A, eIF-2:GTP:methionyl-tRNAi and eIF-5 to form the 43S pre-initiation complex (43S PIC). The eIF-3 complex stimulates mRNA recruitment to the 43S PIC and scanning of the mRNA for AUG recognition. The eIF-3 complex is also required for disassembly and recycling of post-termination ribosomal complexes and subsequently prevents premature joining of the 40S and 60S ribosomal subunits prior to initiation. The eIF-3 complex specifically targets and initiates translation of a subset of mRNAs involved in cell proliferation, including cell cycling, differentiation and apoptosis, and uses different modes of RNA stem-loop binding to exert either translational activation or repression. In the eIF-3 complex, EIF3D specifically recognizes and binds the 7-methylguanosine cap of a subset of mRNAs. The protein is Eukaryotic translation initiation factor 3 subunit D of Bos taurus (Bovine).